The chain runs to 279 residues: Ferredoxin-type protein NapG (279 aa).

The tat-type signal signal peptide spans 1 to 50 (MKVRLKSKKKMKKPALNPERRKFLKEATRTAGGLAGVGILLGLQQNQSLA). 4Fe-4S ferredoxin-type domains are found at residues 63–92 (QDAK…LASL), 100–132 (TPYF…RQAT), 141–177 (LSVL…LETQ), and 188–219 (FIPT…ILPM). Residues Cys72, Cys75, Cys78, Cys82, Cys110, Cys113, Cys118, Cys122, Cys150, Cys158, Cys161, Cys165, Cys197, Cys200, Cys203, and Cys207 each contribute to the [4Fe-4S] cluster site.

The cofactor is [4Fe-4S] cluster. Predicted to be exported by the Tat system. The position of the signal peptide cleavage has not been experimentally proven.

It localises to the periplasm. In terms of biological role, required for electron transfer from ubiquinol, via NapC, to the periplasmic nitrate reductase NapAB complex. This Haemophilus influenzae (strain ATCC 51907 / DSM 11121 / KW20 / Rd) protein is Ferredoxin-type protein NapG (napG).